Here is a 216-residue protein sequence, read N- to C-terminus: Probable transaldolase (216 aa).

The active-site Schiff-base intermediate with substrate is Lys83.

It belongs to the transaldolase family. Type 3B subfamily.

The protein localises to the cytoplasm. It catalyses the reaction D-sedoheptulose 7-phosphate + D-glyceraldehyde 3-phosphate = D-erythrose 4-phosphate + beta-D-fructose 6-phosphate. It functions in the pathway carbohydrate degradation; pentose phosphate pathway; D-glyceraldehyde 3-phosphate and beta-D-fructose 6-phosphate from D-ribose 5-phosphate and D-xylulose 5-phosphate (non-oxidative stage): step 2/3. Functionally, transaldolase is important for the balance of metabolites in the pentose-phosphate pathway. In Methanococcus aeolicus (strain ATCC BAA-1280 / DSM 17508 / OCM 812 / Nankai-3), this protein is Probable transaldolase.